A 259-amino-acid polypeptide reads, in one-letter code: Imidazole glycerol phosphate synthase subunit HisF (259 aa).

Active-site residues include aspartate 11 and aspartate 130.

The protein belongs to the HisA/HisF family. As to quaternary structure, heterodimer of HisH and HisF.

Its subcellular location is the cytoplasm. It carries out the reaction 5-[(5-phospho-1-deoxy-D-ribulos-1-ylimino)methylamino]-1-(5-phospho-beta-D-ribosyl)imidazole-4-carboxamide + L-glutamine = D-erythro-1-(imidazol-4-yl)glycerol 3-phosphate + 5-amino-1-(5-phospho-beta-D-ribosyl)imidazole-4-carboxamide + L-glutamate + H(+). It participates in amino-acid biosynthesis; L-histidine biosynthesis; L-histidine from 5-phospho-alpha-D-ribose 1-diphosphate: step 5/9. IGPS catalyzes the conversion of PRFAR and glutamine to IGP, AICAR and glutamate. The HisF subunit catalyzes the cyclization activity that produces IGP and AICAR from PRFAR using the ammonia provided by the HisH subunit. The sequence is that of Imidazole glycerol phosphate synthase subunit HisF from Solidesulfovibrio magneticus (strain ATCC 700980 / DSM 13731 / RS-1) (Desulfovibrio magneticus).